Reading from the N-terminus, the 182-residue chain is UPF0149 protein PM1723 (182 aa).

This sequence belongs to the UPF0149 family.

This is UPF0149 protein PM1723 from Pasteurella multocida (strain Pm70).